We begin with the raw amino-acid sequence, 244 residues long: MRAFWASLDRRWRRSGVGMPPLRWQACLFVTLNAVILSMLLFDAPIGASKAPAPVKHLGELLTGFGDSAWLIYTSILLFFQGRAGYKLLKTARSKAQALYVSWIGAYLFFTVVFSGLLANLLKRAIGRARPDHFHDYGMFSFAPFSGHSAFESFPSGHSTTVGAFFAAFALLFPRYRVAFIACAIWLGMTRVMVGAHYPSDVIAGLAFGAWFSLLTAIVFARCGLLFKLAPDGWPLAKRLFRTA.

Transmembrane regions (helical) follow at residues 28–48, 60–80, 98–118, 154–174, 178–198, and 201–221; these read LFVT…PIGA, ELLT…LLFF, ALYV…SGLL, FPSG…LLFP, VAFI…GAHY, and DVIA…IVFA.

This sequence belongs to the lipid A LpxE 1-phosphatase family.

It localises to the cell inner membrane. It participates in bacterial outer membrane biogenesis; LPS lipid A biosynthesis. Removes the 1-phosphate group from (tetraacyl) lipid A species, has no requirement for the Kdo(2) moiety of lipid A. Has no 4'-phosphatase activity. Reduces sensitivity of S.meliloti strain 1021 to the cationic antimicrobial peptide (CAMP) polymyxin B. In Rhizobium johnstonii (strain DSM 114642 / LMG 32736 / 3841) (Rhizobium leguminosarum bv. viciae), this protein is Lipid A 1-phosphatase.